The following is a 178-amino-acid chain: ATP synthase subunit delta (178 aa).

The protein belongs to the ATPase delta chain family. As to quaternary structure, F-type ATPases have 2 components, F(1) - the catalytic core - and F(0) - the membrane proton channel. F(1) has five subunits: alpha(3), beta(3), gamma(1), delta(1), epsilon(1). F(0) has three main subunits: a(1), b(2) and c(10-14). The alpha and beta chains form an alternating ring which encloses part of the gamma chain. F(1) is attached to F(0) by a central stalk formed by the gamma and epsilon chains, while a peripheral stalk is formed by the delta and b chains.

The protein resides in the cell inner membrane. Functionally, f(1)F(0) ATP synthase produces ATP from ADP in the presence of a proton or sodium gradient. F-type ATPases consist of two structural domains, F(1) containing the extramembraneous catalytic core and F(0) containing the membrane proton channel, linked together by a central stalk and a peripheral stalk. During catalysis, ATP synthesis in the catalytic domain of F(1) is coupled via a rotary mechanism of the central stalk subunits to proton translocation. Its function is as follows. This protein is part of the stalk that links CF(0) to CF(1). It either transmits conformational changes from CF(0) to CF(1) or is implicated in proton conduction. The polypeptide is ATP synthase subunit delta (Cellvibrio japonicus (strain Ueda107) (Pseudomonas fluorescens subsp. cellulosa)).